The primary structure comprises 480 residues: Glycogen synthase (480 aa).

This sequence belongs to the glycosyltransferase 1 family. Bacterial/plant glycogen synthase subfamily.

The catalysed reaction is [(1-&gt;4)-alpha-D-glucosyl](n) + ADP-alpha-D-glucose = [(1-&gt;4)-alpha-D-glucosyl](n+1) + ADP + H(+). It functions in the pathway glycan biosynthesis; glycogen biosynthesis. Functionally, synthesizes alpha-1,4-glucan chains using ADP-glucose. The chain is Glycogen synthase from Rhizobium etli (strain ATCC 51251 / DSM 11541 / JCM 21823 / NBRC 15573 / CFN 42).